Consider the following 722-residue polypeptide: Polyribonucleotide nucleotidyltransferase (722 aa).

2 residues coordinate Mg(2+): aspartate 487 and aspartate 493. Residues proline 554–isoleucine 613 enclose the KH domain. In terms of domain architecture, S1 motif spans glycine 623 to lysine 691. Residues threonine 697–glutamate 722 form a disordered region. Over residues leucine 701–glycine 713 the composition is skewed to basic and acidic residues.

The protein belongs to the polyribonucleotide nucleotidyltransferase family. Requires Mg(2+) as cofactor.

The protein localises to the cytoplasm. The enzyme catalyses RNA(n+1) + phosphate = RNA(n) + a ribonucleoside 5'-diphosphate. In terms of biological role, involved in mRNA degradation. Catalyzes the phosphorolysis of single-stranded polyribonucleotides processively in the 3'- to 5'-direction. The polypeptide is Polyribonucleotide nucleotidyltransferase (Rhodopseudomonas palustris (strain ATCC BAA-98 / CGA009)).